An 88-amino-acid polypeptide reads, in one-letter code: Large ribosomal subunit protein bL31B (88 aa).

The protein belongs to the bacterial ribosomal protein bL31 family. Type B subfamily. As to quaternary structure, part of the 50S ribosomal subunit.

This is Large ribosomal subunit protein bL31B from Paraburkholderia phytofirmans (strain DSM 17436 / LMG 22146 / PsJN) (Burkholderia phytofirmans).